We begin with the raw amino-acid sequence, 148 residues long: Large ribosomal subunit protein bL9 (148 aa).

It belongs to the bacterial ribosomal protein bL9 family.

In terms of biological role, binds to the 23S rRNA. The sequence is that of Large ribosomal subunit protein bL9 from Bifidobacterium animalis subsp. lactis (strain AD011).